The primary structure comprises 244 residues: 3-deoxy-manno-octulosonate cytidylyltransferase (244 aa).

The protein belongs to the KdsB family.

It is found in the cytoplasm. It catalyses the reaction 3-deoxy-alpha-D-manno-oct-2-ulosonate + CTP = CMP-3-deoxy-beta-D-manno-octulosonate + diphosphate. It functions in the pathway nucleotide-sugar biosynthesis; CMP-3-deoxy-D-manno-octulosonate biosynthesis; CMP-3-deoxy-D-manno-octulosonate from 3-deoxy-D-manno-octulosonate and CTP: step 1/1. Its pathway is bacterial outer membrane biogenesis; lipopolysaccharide biosynthesis. Its function is as follows. Activates KDO (a required 8-carbon sugar) for incorporation into bacterial lipopolysaccharide in Gram-negative bacteria. The polypeptide is 3-deoxy-manno-octulosonate cytidylyltransferase (Synechococcus elongatus (strain ATCC 33912 / PCC 7942 / FACHB-805) (Anacystis nidulans R2)).